A 161-amino-acid polypeptide reads, in one-letter code: Globin CTT-VIIB-4 (161 aa).

The N-terminal stretch at 1 to 16 (MKFFAVLALCIVGAIA) is a signal peptide. A Globin domain is found at 18–161 (PLTADEASLV…NTMAVAVAHL (144 aa)). 2 residues coordinate heme b: His76 and His111.

This sequence belongs to the globin family. Homodimer.

This chain is Globin CTT-VIIB-4 (CTT-7B4), found in Chironomus thummi thummi (Midge).